A 255-amino-acid polypeptide reads, in one-letter code: tRNA (guanine-N(1)-)-methyltransferase (255 aa).

S-adenosyl-L-methionine is bound by residues G113 and 133 to 138; that span reads IGDYVL.

This sequence belongs to the RNA methyltransferase TrmD family. Homodimer.

The protein localises to the cytoplasm. It carries out the reaction guanosine(37) in tRNA + S-adenosyl-L-methionine = N(1)-methylguanosine(37) in tRNA + S-adenosyl-L-homocysteine + H(+). Its function is as follows. Specifically methylates guanosine-37 in various tRNAs. This chain is tRNA (guanine-N(1)-)-methyltransferase, found in Salmonella agona (strain SL483).